We begin with the raw amino-acid sequence, 344 residues long: Biotin synthase (344 aa).

The Radical SAM core domain maps to 40–267 (AQVQVSTLLS…KSMVRLSAGR (228 aa)). Positions 55, 59, and 62 each coordinate [4Fe-4S] cluster. Residues Cys99, Cys130, Cys190, and Arg262 each contribute to the [2Fe-2S] cluster site.

The protein belongs to the radical SAM superfamily. Biotin synthase family. As to quaternary structure, homodimer. [4Fe-4S] cluster is required as a cofactor. It depends on [2Fe-2S] cluster as a cofactor.

It carries out the reaction (4R,5S)-dethiobiotin + (sulfur carrier)-SH + 2 reduced [2Fe-2S]-[ferredoxin] + 2 S-adenosyl-L-methionine = (sulfur carrier)-H + biotin + 2 5'-deoxyadenosine + 2 L-methionine + 2 oxidized [2Fe-2S]-[ferredoxin]. The protein operates within cofactor biosynthesis; biotin biosynthesis; biotin from 7,8-diaminononanoate: step 2/2. Its function is as follows. Catalyzes the conversion of dethiobiotin (DTB) to biotin by the insertion of a sulfur atom into dethiobiotin via a radical-based mechanism. This Xanthomonas euvesicatoria pv. vesicatoria (strain 85-10) (Xanthomonas campestris pv. vesicatoria) protein is Biotin synthase.